The chain runs to 424 residues: UDP-N-acetylglucosamine 1-carboxyvinyltransferase (424 aa).

A phosphoenolpyruvate-binding site is contributed by 22–23 (KN). Position 93 (arginine 93) interacts with UDP-N-acetyl-alpha-D-glucosamine. Cysteine 117 acts as the Proton donor in catalysis. Cysteine 117 is subject to 2-(S-cysteinyl)pyruvic acid O-phosphothioketal. UDP-N-acetyl-alpha-D-glucosamine-binding positions include 122–126 (RPIDL), aspartate 307, and isoleucine 329.

This sequence belongs to the EPSP synthase family. MurA subfamily.

The protein resides in the cytoplasm. The catalysed reaction is phosphoenolpyruvate + UDP-N-acetyl-alpha-D-glucosamine = UDP-N-acetyl-3-O-(1-carboxyvinyl)-alpha-D-glucosamine + phosphate. The protein operates within cell wall biogenesis; peptidoglycan biosynthesis. Cell wall formation. Adds enolpyruvyl to UDP-N-acetylglucosamine. This chain is UDP-N-acetylglucosamine 1-carboxyvinyltransferase, found in Chlorobium phaeovibrioides (strain DSM 265 / 1930) (Prosthecochloris vibrioformis (strain DSM 265)).